The primary structure comprises 667 residues: Bicarbonate transport ATP-binding protein CmpC (667 aa).

Positions 5-239 constitute an ABC transporter domain; sequence VAVDNIDKVF…RPRKRMEVVE (235 aa). 42-49 is a binding site for ATP; that stretch reads GHSGCGKS. The cmpA-like stretch occupies residues 281 to 667; that stretch reads LELGYVPLVA…DNPTPAPVFA (387 aa).

The protein belongs to the ABC transporter superfamily. Nitrate/nitrite/cyanate uptake transporter (NitT) (TC 3.A.1.16) family. As to quaternary structure, the complex is composed of two ATP-binding proteins (CmpC and CmpD), a transmembrane protein (CmpB) and a solute-binding protein (CmpA).

The protein resides in the cell inner membrane. Part of the ABC transporter complex CmpABCD involved in bicarbonate transport. Responsible for energy coupling to the transport system. This is Bicarbonate transport ATP-binding protein CmpC (cmpC) from Synechocystis sp. (strain ATCC 27184 / PCC 6803 / Kazusa).